A 648-amino-acid polypeptide reads, in one-letter code: SRSF protein kinase 1 (648 aa).

A disordered region spans residues 1 to 57; sequence MERKVLALQARKKRTKAKKDKAQRKPETQHRGSAPHSESDIPEQEEEILGSDDDEQE. Residues 10–22 are compositionally biased toward basic residues; that stretch reads ARKKRTKAKKDKA. Residues 40-57 show a composition bias toward acidic residues; the sequence is DIPEQEEEILGSDDDEQE. Position 51 is a phosphoserine (Ser-51). Residues 80–646 enclose the Protein kinase domain; it reads YHVIRKLGWG…AAECLRHPWL (567 aa). Residues 86–94 and Lys-109 contribute to the ATP site; that span reads LGWGHFSTV. Catalysis depends on Asp-213, which acts as the Proton acceptor. 2 disordered regions span residues 238-354 and 395-464; these read WQRS…APEI and PSFL…DSKG. Positions 265 to 276 are enriched in basic residues; sequence KNKKKKLKKKQK. 2 stretches are compositionally biased toward basic and acidic residues: residues 277–288 and 304–317; these read RQAELLEKRMQE and NKQE…DRPL. Residues Ser-309, Ser-311, and Ser-333 each carry the phosphoserine modification. Composition is skewed to polar residues over residues 333–343 and 396–441; these read SNSIGQDQTLT and SFLN…TQLE. The residue at position 448 (Thr-448) is a Phosphothreonine. A Phosphoserine modification is found at Ser-450. Position 548 is a phosphoserine; by CK2 (Ser-548).

The protein belongs to the protein kinase superfamily. CMGC Ser/Thr protein kinase family. Monomer. Found in a multisubunit complex containing seven proteins, named toposome, which separates entangled circular chromatin DNA during chromosome segregation. Interacts with HHV-1 ICP27 protein. Interacts with DNAJC8 and AHSA1/AHA1 and this mediates formation of a complex with the Hsp70 /Hsp90 machinery. Binds to IGF2BP1, SYNCRIP, HNRNPA2B1 and HNRNPC. Interacts with SAFB/SAFB1 and SAFB2 which inhibits its activity. Requires Mg(2+) as cofactor. As to expression, predominantly expressed in the testis but is also present at lower levels in heart, spleen, liver, brain, kidney, lung and skeletal muscle. Present in all germinal cells in the seminiferous tubules but not in mature spermatozoa.

It is found in the cytoplasm. The protein localises to the nucleus. It localises to the nucleoplasm. Its subcellular location is the nucleus matrix. The protein resides in the microsome. It is found in the nucleus speckle. The protein localises to the chromosome. The enzyme catalyses L-seryl-[protein] + ATP = O-phospho-L-seryl-[protein] + ADP + H(+). It catalyses the reaction L-threonyl-[protein] + ATP = O-phospho-L-threonyl-[protein] + ADP + H(+). Its activity is regulated as follows. Activated by phosphorylation on Ser-51 and Ser-548. Functionally, serine/arginine-rich protein-specific kinase which specifically phosphorylates its substrates at serine residues located in regions rich in arginine/serine dipeptides, known as RS domains and is involved in the phosphorylation of SR splicing factors and the regulation of splicing. Plays a central role in the regulatory network for splicing, controlling the intranuclear distribution of splicing factors in interphase cells and the reorganization of nuclear speckles during mitosis. Can influence additional steps of mRNA maturation, as well as other cellular activities, such as chromatin reorganization in somatic and sperm cells and cell cycle progression. Phosphorylates SFRS2, ZRSR2, LBR and PRM1. Phosphorylates SRSF1 using a directional (C-terminal to N-terminal) and a dual-track mechanism incorporating both processive phosphorylation (in which the kinase stays attached to the substrate after each round of phosphorylation) and distributive phosphorylation steps (in which the kinase and substrate dissociate after each phosphorylation event). The RS domain of SRSF1 binds first to a docking groove in the large lobe of the kinase domain of SRPK1. This induces certain structural changes in SRPK1 and/or RRM2 domain of SRSF1, allowing RRM2 to bind the kinase and initiate phosphorylation. The cycles continue for several phosphorylation steps in a processive manner (steps 1-8) until the last few phosphorylation steps (approximately steps 9-12). During that time, a mechanical stress induces the unfolding of the beta-4 motif in RRM2, which then docks at the docking groove of SRPK1. This also signals RRM2 to begin to dissociate, which facilitates SRSF1 dissociation after phosphorylation is completed. Can mediate hepatitis B virus (HBV) core protein phosphorylation. It plays a negative role in the regulation of HBV replication through a mechanism not involving the phosphorylation of the core protein but by reducing the packaging efficiency of the pregenomic RNA (pgRNA) without affecting the formation of the viral core particles. Can induce splicing of exon 10 in MAPT/TAU. This chain is SRSF protein kinase 1, found in Mus musculus (Mouse).